Reading from the N-terminus, the 146-residue chain is Core protein OPG114 (146 aa).

Belongs to the orthopoxvirus OPG114 family. Part of a complex composed of the kinase OPG054, OPG092, OPG100, OPG114, OPG115, OPG142 and OPG157.

The protein resides in the virion. In terms of biological role, late protein which is part of a large complex required for early virion morphogenesis. This complex participates in the formation of virosomes and the incorporation of virosomal contents into nascent immature virions. The sequence is that of Core protein OPG114 (OPG114) from Monkeypox virus.